The primary structure comprises 424 residues: Putative polyketide beta-ketoacyl synthase 2 (424 aa).

The region spanning 13–416 (SRRAVVTGLG…GSNSALVLRR (404 aa)) is the Ketosynthase family 3 (KS3) domain.

The protein belongs to the thiolase-like superfamily. Beta-ketoacyl-ACP synthases family.

In terms of biological role, involved in developmentally regulated synthesis of a compound biosynthetically related to polyketide antibiotics which is essential for spore color in Streptomyces coelicolor. The protein is Putative polyketide beta-ketoacyl synthase 2 of Streptomyces coelicolor (strain ATCC BAA-471 / A3(2) / M145).